A 175-amino-acid polypeptide reads, in one-letter code: Peptide deformylase (175 aa).

Positions 96 and 138 each coordinate Fe cation. Residue glutamate 139 is part of the active site. A Fe cation-binding site is contributed by histidine 142.

This sequence belongs to the polypeptide deformylase family. Requires Fe(2+) as cofactor.

It carries out the reaction N-terminal N-formyl-L-methionyl-[peptide] + H2O = N-terminal L-methionyl-[peptide] + formate. In terms of biological role, removes the formyl group from the N-terminal Met of newly synthesized proteins. Requires at least a dipeptide for an efficient rate of reaction. N-terminal L-methionine is a prerequisite for activity but the enzyme has broad specificity at other positions. The protein is Peptide deformylase of Helicobacter acinonychis (strain Sheeba).